Consider the following 536-residue polypeptide: 3',5'-cyclic-AMP phosphodiesterase 4C (536 aa).

Residues 49-69 are disordered; that stretch reads QALLGTPPQSSQQAAPAEESG. The region spanning 178 to 507 is the PDEase domain; that stretch reads VQTDQEEQLA…EWYQSRVPCS (330 aa). His-254 acts as the Proton donor in catalysis. Residue His-254 coordinates 3',5'-cyclic AMP. Positions 254 and 258 each coordinate AMP. Zn(2+)-binding residues include His-258, His-294, Asp-295, and Asp-412. Residues Asp-295, Asp-412, Gln-463, and Phe-466 each contribute to the AMP site. Asp-295 contacts Mg(2+). Asp-295 contacts Mn(2+). The 3',5'-cyclic AMP site is built by Gln-463 and Phe-466. Phosphoserine is present on Ser-507.

It belongs to the cyclic nucleotide phosphodiesterase family. PDE4 subfamily. Part of a complex containing AKAP5, ADCY5, ADCY6 and PKD2. It depends on Zn(2+) as a cofactor. The cofactor is Mg(2+). Requires Mn(2+) as cofactor.

The protein localises to the cell projection. It is found in the cilium. The catalysed reaction is 3',5'-cyclic AMP + H2O = AMP + H(+). The protein operates within purine metabolism; 3',5'-cyclic AMP degradation; AMP from 3',5'-cyclic AMP: step 1/1. Hydrolyzes the second messenger cAMP, which is a key regulator of many important physiological processes. This chain is 3',5'-cyclic-AMP phosphodiesterase 4C, found in Rattus norvegicus (Rat).